The chain runs to 627 residues: Membrane protein insertase YidC (627 aa).

Transmembrane regions (helical) follow at residues 3–23 (KNTV…SWLN), 376–396 (WGLI…PLAY), 450–470 (LPML…PTTI), 502–522 (FYGN…ILYI), 534–554 (EGMA…LFFF), and 558–578 (ASGL…QYMS).

It belongs to the OXA1/ALB3/YidC family. Type 1 subfamily. In terms of assembly, interacts with the Sec translocase complex via SecD. Specifically interacts with transmembrane segments of nascent integral membrane proteins during membrane integration.

Its subcellular location is the cell inner membrane. In terms of biological role, required for the insertion and/or proper folding and/or complex formation of integral membrane proteins into the membrane. Involved in integration of membrane proteins that insert both dependently and independently of the Sec translocase complex, as well as at least some lipoproteins. Aids folding of multispanning membrane proteins. The polypeptide is Membrane protein insertase YidC (Porphyromonas gingivalis (strain ATCC BAA-308 / W83)).